The primary structure comprises 252 residues: 2-succinyl-6-hydroxy-2,4-cyclohexadiene-1-carboxylate synthase (252 aa).

This sequence belongs to the AB hydrolase superfamily. MenH family. Monomer.

It catalyses the reaction 5-enolpyruvoyl-6-hydroxy-2-succinyl-cyclohex-3-ene-1-carboxylate = (1R,6R)-6-hydroxy-2-succinyl-cyclohexa-2,4-diene-1-carboxylate + pyruvate. It functions in the pathway quinol/quinone metabolism; 1,4-dihydroxy-2-naphthoate biosynthesis; 1,4-dihydroxy-2-naphthoate from chorismate: step 3/7. Its pathway is quinol/quinone metabolism; menaquinone biosynthesis. Functionally, catalyzes a proton abstraction reaction that results in 2,5-elimination of pyruvate from 2-succinyl-5-enolpyruvyl-6-hydroxy-3-cyclohexene-1-carboxylate (SEPHCHC) and the formation of 2-succinyl-6-hydroxy-2,4-cyclohexadiene-1-carboxylate (SHCHC). The polypeptide is 2-succinyl-6-hydroxy-2,4-cyclohexadiene-1-carboxylate synthase (Escherichia coli (strain SE11)).